The chain runs to 306 residues: tRNA dimethylallyltransferase (306 aa).

11-18 contributes to the ATP binding site; it reads APTAAGKT. Position 13–18 (13–18) interacts with substrate; that stretch reads TAAGKT.

It belongs to the IPP transferase family. In terms of assembly, monomer. Requires Mg(2+) as cofactor.

The catalysed reaction is adenosine(37) in tRNA + dimethylallyl diphosphate = N(6)-dimethylallyladenosine(37) in tRNA + diphosphate. Catalyzes the transfer of a dimethylallyl group onto the adenine at position 37 in tRNAs that read codons beginning with uridine, leading to the formation of N6-(dimethylallyl)adenosine (i(6)A). The chain is tRNA dimethylallyltransferase from Deinococcus radiodurans (strain ATCC 13939 / DSM 20539 / JCM 16871 / CCUG 27074 / LMG 4051 / NBRC 15346 / NCIMB 9279 / VKM B-1422 / R1).